The sequence spans 803 residues: Na(+)/H(+) antiporter subunit A1 (803 aa).

19 helical membrane-spanning segments follow: residues 1-21, 30-50, 79-99, 117-137, 166-186, 208-228, 265-285, 300-320, 337-357, 377-397, 427-447, 472-492, 522-542, 591-611, 621-641, 646-666, 671-691, 707-727, and 764-784; these read MSLL…IPIL, LGWF…SLIS, LSIL…LYSI, LFMG…LYLF, LIIT…ISLA, FIFA…QVPF, LFAI…ITLF, ILAF…GIGA, FTAA…LFMI, LTIM…MAGI, LGIV…VYSI, ILML…GLFP, GITP…LLLL, LVII…SVPF, IHIY…MVVI, LFSV…FVFF, LALT…LCFY, LTNA…GLIA, and MDTL…YTMI.

Belongs to the CPA3 antiporters (TC 2.A.63) subunit A family. May form a heterooligomeric complex that consists of seven subunits: mnhA1, mnhB1, mnhC1, mnhD1, mnhE1, mnhF1 and mnhG1.

The protein localises to the cell membrane. Mnh complex is a Na(+)/H(+) antiporter involved in Na(+) excretion. The protein is Na(+)/H(+) antiporter subunit A1 (mnhA1) of Staphylococcus haemolyticus (strain JCSC1435).